A 488-amino-acid polypeptide reads, in one-letter code: Glycogen synthase (488 aa).

R20 provides a ligand contact to ADP-alpha-D-glucose.

It belongs to the glycosyltransferase 1 family. Bacterial/plant glycogen synthase subfamily.

It catalyses the reaction [(1-&gt;4)-alpha-D-glucosyl](n) + ADP-alpha-D-glucose = [(1-&gt;4)-alpha-D-glucosyl](n+1) + ADP + H(+). It functions in the pathway glycan biosynthesis; glycogen biosynthesis. In terms of biological role, synthesizes alpha-1,4-glucan chains using ADP-glucose. The chain is Glycogen synthase from Chlorobaculum parvum (strain DSM 263 / NCIMB 8327) (Chlorobium vibrioforme subsp. thiosulfatophilum).